Reading from the N-terminus, the 399-residue chain is Serine/threonine-protein kinase PknL (399 aa).

The Cytoplasmic portion of the chain corresponds to 1-368 (MVEAGTRDPL…FIWARQHARR (368 aa)). One can recognise a Protein kinase domain in the interval 19-278 (YLVQAKIASG…IAMGADLEAI (260 aa)). Residues 25 to 33 (IASGGTSTV) and K48 each bind ATP. Residue T32 is modified to Phosphothreonine; by autocatalysis. The residue at position 62 (T62) is a Phosphothreonine; by autocatalysis. Residue D142 is the Proton acceptor of the active site. Phosphothreonine; by autocatalysis is present on residues T173, T175, and T323. The tract at residues 312-346 (GQLGAKPVHHPTRQLTRQPGDCSEPASGSEPEHEP) is disordered. Residues 369–389 (MVLVWVSVVLAITGLVASAAW) traverse the membrane as a helical segment. Topologically, residues 390–399 (TIGSNLSGLL) are extracellular.

The protein belongs to the protein kinase superfamily. Ser/Thr protein kinase family. Post-translationally, autophosphorylated. Thr-173 is required for autophosphorylation and transphosphorylation activities. Thr-175 is not necessary for autophosphorylation activity, but is required for full kinase activity.

It localises to the cell membrane. It carries out the reaction L-seryl-[protein] + ATP = O-phospho-L-seryl-[protein] + ADP + H(+). The enzyme catalyses L-threonyl-[protein] + ATP = O-phospho-L-threonyl-[protein] + ADP + H(+). Its function is as follows. Phosphorylates the DNA-binding protein MT2231. May be involved in the regulation of cell division and cell envelope biosynthesis. The sequence is that of Serine/threonine-protein kinase PknL (pknL) from Mycobacterium tuberculosis (strain CDC 1551 / Oshkosh).